Consider the following 443-residue polypeptide: Delta(6)-fatty-acid desaturase fat-3 (443 aa).

Residues 1–71 (MVVDKNASGL…DLLKKHGEHD (71 aa)) enclose the Cytochrome b5 heme-binding domain. The next 3 membrane-spanning stretches (helical) occupy residues 136-156 (IMAF…ACLL), 296-316 (TIVG…TWPL), and 318-338 (VAYF…VVTF).

The protein belongs to the fatty acid desaturase type 1 family.

The protein localises to the membrane. It catalyses the reaction (9Z,12Z)-octadecadienoyl-CoA + 2 Fe(II)-[cytochrome b5] + O2 + 2 H(+) = (6Z,9Z,12Z)-octadecatrienoyl-CoA + 2 Fe(III)-[cytochrome b5] + 2 H2O. It carries out the reaction (9Z,12Z,15Z)-octadecatrienoyl-CoA + 2 Fe(II)-[cytochrome b5] + O2 + 2 H(+) = (6Z,9Z,12Z,15Z)-octadecatetraenoyl-CoA + 2 Fe(III)-[cytochrome b5] + 2 H2O. It functions in the pathway lipid metabolism; polyunsaturated fatty acid biosynthesis. In terms of biological role, can function as a Delta(6) fatty acid desaturase. Introduces a double bond in the fatty acid chain 6 carbons away from carboxy terminal to biosynthesize polyunsaturated fatty acids (PUFAs) endogenously (PUFAs are essential for membrane structure and many cellular and physiological processes). Acts on a variety of substrates such as linoleoyl-CoA ((9Z,12Z)-octadecadienoyl-CoA, C18:2n-6) and alpha-linolenoyl-CoA ((9Z,12Z,15Z)-octadecatrienoyl-CoA, C18:3n-3) to produce gamma-linolenoyl-CoA ((6Z,9Z,12Z)-octadecatrienoyl-CoA, C18:3n-6) and (6Z,9Z,12Z,15Z)-octadecatetraenoyl-CoA (18:4n-3) respectively. Unlike plants, Caenorhabditis elegans desaturases seem to use fatty acyl-CoAs as substrates. Plays a role in synaptic vesicle recycling by regulating synaptojanin unc-26 localization at synapses. In Caenorhabditis elegans, this protein is Delta(6)-fatty-acid desaturase fat-3 (fat-3).